We begin with the raw amino-acid sequence, 352 residues long: Carbohydrate sulfotransferase 11 (352 aa).

Over 1–16 (MKPALLEVMRMNRICR) the chain is Cytoplasmic. The chain crosses the membrane as a helical; Signal-anchor for type II membrane protein span at residues 17–37 (MVLATCFGSFILVIFYFQSML). Residues 38–352 (HPVMRRNPFG…YSVPNYLKLD (315 aa)) lie on the Lumenal side of the membrane. 3'-phosphoadenylyl sulfate contacts are provided by residues 124-130 (PKVACTN) and 186-194 (REPFERLVS). Asn-205, Asn-223, Asn-321, and Asn-342 each carry an N-linked (GlcNAc...) asparagine glycan.

It belongs to the sulfotransferase 2 family. N-glycosylated; required for activity and stability. As to expression, predominantly expressed in brain and kidney. Also expressed at weaker level in heart, spleen and lung. Expressed in developing chondrocytes.

The protein resides in the golgi apparatus membrane. The catalysed reaction is chondroitin beta-D-glucuronate + n 3'-phosphoadenylyl sulfate = chondroitin 4'-sulfate + n adenosine 3',5'-bisphosphate + n H(+). Catalyzes the transfer of sulfate to position 4 of the N-acetylgalactosamine (GalNAc) residue of chondroitin. Chondroitin sulfate constitutes the predominant proteoglycan present in cartilage and is distributed on the surfaces of many cells and extracellular matrices. Can also sulfate Gal residues in desulfated dermatan sulfate. Preferentially sulfates in GlcA-&gt;GalNAc unit than in IdoA-&gt;GalNAc unit. Does not form 4, 6-di-O-sulfated GalNAc when chondroitin sulfate C is used as an acceptor. In Mus musculus (Mouse), this protein is Carbohydrate sulfotransferase 11 (Chst11).